Reading from the N-terminus, the 647-residue chain is Epithelial sodium channel subunit beta (647 aa).

The Cytoplasmic portion of the chain corresponds to 1–57 (MIHGKMKRLKRYFTRALHRIQKGPGYTYKELLVWFCDNTNTHGPKRIIKEGPKKRVM). Residues 58-78 (WFILTLVFAGLVFWQWGVLIL) traverse the membrane as a helical segment. Residues 79-552 (TYLSYGVSVS…GGQFGFWMGG (474 aa)) are Extracellular-facing. 8 disulfides stabilise this stretch: Cys104/Cys291, Cys215/Cys222, Cys268/Cys275, Cys381/Cys468, Cys406/Cys464, Cys410/Cys460, Cys419/Cys446, and Cys421/Cys435. Residues 553–573 (SVLCIIEFGEIIIDCMWITIL) traverse the membrane as a helical segment. At 574-647 (KFLAWSRNRR…AEPVSSDEEN (74 aa)) the chain is on the cytoplasmic side. A disordered region spans residues 586-647 (RKRPQYSDPP…AEPVSSDEEN (62 aa)).

Belongs to the amiloride-sensitive sodium channel (TC 1.A.6) family. SCNN1B subfamily. In terms of assembly, component of the heterotrimeric epithelial sodium channel (ENaC) composed of an alpha/SCNN1A, a beta/SCNN1B and a gamma/SCNN1G subunit.

The protein resides in the apical cell membrane. The protein localises to the cytoplasmic vesicle membrane. The enzyme catalyses Na(+)(in) = Na(+)(out). Its activity is regulated as follows. Originally identified and characterized by its inhibition by the diuretic drug amiloride. Functionally, this is one of the three pore-forming subunits of the heterotrimeric epithelial sodium channel (ENaC), a critical regulator of sodium balance and fluid homeostasis. ENaC operates in epithelial tissues, where it mediates the electrodiffusion of sodium ions from extracellular fluid through the apical membrane of cells, with water following osmotically. The polypeptide is Epithelial sodium channel subunit beta (scnn1b-a) (Xenopus laevis (African clawed frog)).